The primary structure comprises 369 residues: tRNA/tmRNA (uracil-C(5))-methyltransferase (369 aa).

Positions 193, 221, 226, 242, and 302 each coordinate S-adenosyl-L-methionine. Cys327 (nucleophile) is an active-site residue. Catalysis depends on Glu361, which acts as the Proton acceptor.

It belongs to the class I-like SAM-binding methyltransferase superfamily. RNA M5U methyltransferase family. TrmA subfamily.

The enzyme catalyses uridine(54) in tRNA + S-adenosyl-L-methionine = 5-methyluridine(54) in tRNA + S-adenosyl-L-homocysteine + H(+). It carries out the reaction uridine(341) in tmRNA + S-adenosyl-L-methionine = 5-methyluridine(341) in tmRNA + S-adenosyl-L-homocysteine + H(+). In terms of biological role, dual-specificity methyltransferase that catalyzes the formation of 5-methyluridine at position 54 (m5U54) in all tRNAs, and that of position 341 (m5U341) in tmRNA (transfer-mRNA). The polypeptide is tRNA/tmRNA (uracil-C(5))-methyltransferase (Actinobacillus succinogenes (strain ATCC 55618 / DSM 22257 / CCUG 43843 / 130Z)).